Consider the following 380-residue polypeptide: Gonadotropin-releasing hormone II receptor (380 aa).

The Extracellular portion of the chain corresponds to 1–40 (MSAVNGTPWGSSAREEVWAGSGVEVEGSELPTFSTAAKVR). Residues 41–60 (VGVTIVLFVSSAGGNLAVLW) form a helical membrane-spanning segment. Residues 61–76 (SVTRPQPSQLRPSPVR) are Cytoplasmic-facing. Residues 77–96 (RLFAHLAAADLLVTFVVMPL) traverse the membrane as a helical segment. The Extracellular portion of the chain corresponds to 97–114 (DATWNITVQWLAGDIACR). N101 carries N-linked (GlcNAc...) asparagine glycosylation. C113 and C188 form a disulfide bridge. Residues 115–136 (TLMFLKLMAMYAAAFLPVVIGL) form a helical membrane-spanning segment. Residues 137–160 (DRQAAVLNPLGSRSGVRKLLGAAW) lie on the Cytoplasmic side of the membrane. Residues 161-178 (GLSFLLALPQLFLFHTVH) traverse the membrane as a helical segment. Residues 179–204 (RAGPVPFTQCATKGSFKARWQETTYN) lie on the Extracellular side of the membrane. Residues 205 to 224 (LFTFCCLFLLPLTAMAICYS) traverse the membrane as a helical segment. At 225 to 278 (RIVLGVSSPRTRKGSHAPAGEFALRRSFDNRPRVRLRALRLALLVLLTFILCWT) the chain is on the cytoplasmic side. The helical transmembrane segment at 279 to 297 (PYYLLGLWYWFSPSMLSEV) threads the bilayer. At 298 to 303 (PPSLSH) the chain is on the extracellular side. The chain crosses the membrane as a helical span at residues 304-323 (ILFLFGLLNAPLDPLLYGAF). Topologically, residues 324 to 380 (TLGCRRGHQELSMDSSREEGSRRMFQQDIQALRQTEVQKTVTSRKAGETKDIPITSI) are cytoplasmic.

This sequence belongs to the G-protein coupled receptor 1 family. In terms of processing, phosphorylated on the C-terminal cytoplasmic tail.

Its subcellular location is the cell membrane. In terms of biological role, receptor for gonadotropin releasing hormone II (GnRH II). This receptor mediates its action by association with G proteins that activate a phosphatidylinositol-calcium second messenger system. This chain is Gonadotropin-releasing hormone II receptor (GNRHR2), found in Callithrix jacchus (White-tufted-ear marmoset).